Reading from the N-terminus, the 192-residue chain is Elongation factor P (192 aa).

It belongs to the elongation factor P family.

The protein resides in the cytoplasm. It functions in the pathway protein biosynthesis; polypeptide chain elongation. Functionally, involved in peptide bond synthesis. Stimulates efficient translation and peptide-bond synthesis on native or reconstituted 70S ribosomes in vitro. Probably functions indirectly by altering the affinity of the ribosome for aminoacyl-tRNA, thus increasing their reactivity as acceptors for peptidyl transferase. The polypeptide is Elongation factor P (efp) (Aquifex aeolicus (strain VF5)).